The sequence spans 411 residues: LL-diaminopimelate aminotransferase (411 aa).

Positions 15 and 42 each coordinate substrate. Residues tyrosine 72, 108–109 (AK), tyrosine 132, asparagine 187, tyrosine 218, and 246–248 (SFS) each bind pyridoxal 5'-phosphate. Substrate-binding residues include lysine 109, tyrosine 132, and asparagine 187. An N6-(pyridoxal phosphate)lysine modification is found at lysine 249. Arginine 257 and asparagine 292 together coordinate pyridoxal 5'-phosphate. Substrate contacts are provided by asparagine 292 and arginine 388.

This sequence belongs to the class-I pyridoxal-phosphate-dependent aminotransferase family. LL-diaminopimelate aminotransferase subfamily. As to quaternary structure, homodimer. Requires pyridoxal 5'-phosphate as cofactor.

It catalyses the reaction (2S,6S)-2,6-diaminopimelate + 2-oxoglutarate = (S)-2,3,4,5-tetrahydrodipicolinate + L-glutamate + H2O + H(+). It functions in the pathway amino-acid biosynthesis; L-lysine biosynthesis via DAP pathway; LL-2,6-diaminopimelate from (S)-tetrahydrodipicolinate (aminotransferase route): step 1/1. Its function is as follows. Involved in the synthesis of meso-diaminopimelate (m-DAP or DL-DAP), required for both lysine and peptidoglycan biosynthesis. Catalyzes the direct conversion of tetrahydrodipicolinate to LL-diaminopimelate. The polypeptide is LL-diaminopimelate aminotransferase (Crocosphaera subtropica (strain ATCC 51142 / BH68) (Cyanothece sp. (strain ATCC 51142))).